Here is a 125-residue protein sequence, read N- to C-terminus: uncharacterized protein (125 aa).

This is an uncharacterized protein from Escherichia coli (strain K12).